Consider the following 1214-residue polypeptide: ATP-dependent helicase/nuclease subunit A (1214 aa).

The 457-residue stretch at 27–483 (HKRTAQQIEA…ILLKENFRSQ (457 aa)) folds into the UvrD-like helicase ATP-binding domain. Position 48 to 55 (48 to 55 (ASAGSGKT)) interacts with ATP. Residues 512-800 (QLVAGSEAQK…NLMTIHKSKG (289 aa)) form the UvrD-like helicase C-terminal domain.

The protein belongs to the helicase family. AddA subfamily. Heterodimer of AddA and AddB/RexB. Mg(2+) is required as a cofactor.

The catalysed reaction is Couples ATP hydrolysis with the unwinding of duplex DNA by translocating in the 3'-5' direction.. It catalyses the reaction ATP + H2O = ADP + phosphate + H(+). Its function is as follows. The heterodimer acts as both an ATP-dependent DNA helicase and an ATP-dependent, dual-direction single-stranded exonuclease. Recognizes the chi site generating a DNA molecule suitable for the initiation of homologous recombination. The AddA nuclease domain is required for chi fragment generation; this subunit has the helicase and 3' -&gt; 5' nuclease activities. In Streptococcus equi subsp. zooepidemicus (strain MGCS10565), this protein is ATP-dependent helicase/nuclease subunit A.